We begin with the raw amino-acid sequence, 571 residues long: uncharacterized protein (571 aa).

A run of 11 helical transmembrane segments spans residues 5–27, 34–56, 61–79, 92–114, 161–183, 391–408, 412–434, 455–474, 484–506, 513–532, and 547–569; these read VILN…GYLV, TFVL…LNIT, IGSL…QGGA, LLAS…AWIF, TVGY…ATIF, FIFF…GLIS, FGIS…FGWI, LGLA…QAIT, FFLG…YYLL, VLLA…AALL, and SYAL…VTII.

This sequence belongs to the AAE transporter (TC 2.A.81) family.

It is found in the cell membrane. This is an uncharacterized protein from Francisella tularensis subsp. tularensis (strain SCHU S4 / Schu 4).